The sequence spans 1099 residues: Carbamoyl phosphate synthase large chain (1099 aa).

Residues 1 to 402 (MPKREDIKRI…ALGKALRSLE (402 aa)) form a carboxyphosphate synthetic domain region. Positions 129, 169, 175, 176, 208, 210, 215, 241, 242, 243, 285, and 299 each coordinate ATP. Residues 133–328 (KETMEKAGLE…IAKVAALLAV (196 aa)) enclose the ATP-grasp 1 domain. Mg(2+)-binding residues include Q285, E299, and N301. Mn(2+)-binding residues include Q285, E299, and N301. Residues 403–541 (LDAAPKLDLE…STYNGVENEA (139 aa)) are oligomerization domain. Positions 542–944 (VPSDREKIMI…AFAKAQIAAG (403 aa)) are carbamoyl phosphate synthetic domain. The 192-residue stretch at 666-857 (AKLLKQIGLK…VARIAAKIMV (192 aa)) folds into the ATP-grasp 2 domain. 10 residues coordinate ATP: R702, K741, L743, E748, G773, V774, H775, S776, Q816, and E828. Mg(2+) is bound by residues Q816, E828, and N830. Residues Q816, E828, and N830 each coordinate Mn(2+). Positions 945 to 1099 (NPLPTTGAIL…VRRLTDTWKM (155 aa)) constitute an MGS-like domain. Residues 945–1099 (NPLPTTGAIL…VRRLTDTWKM (155 aa)) form an allosteric domain region.

The protein belongs to the CarB family. As to quaternary structure, composed of two chains; the small (or glutamine) chain promotes the hydrolysis of glutamine to ammonia, which is used by the large (or ammonia) chain to synthesize carbamoyl phosphate. Tetramer of heterodimers (alpha,beta)4. Mg(2+) serves as cofactor. Mn(2+) is required as a cofactor.

The enzyme catalyses hydrogencarbonate + L-glutamine + 2 ATP + H2O = carbamoyl phosphate + L-glutamate + 2 ADP + phosphate + 2 H(+). The catalysed reaction is hydrogencarbonate + NH4(+) + 2 ATP = carbamoyl phosphate + 2 ADP + phosphate + 2 H(+). Its pathway is amino-acid biosynthesis; L-arginine biosynthesis; carbamoyl phosphate from bicarbonate: step 1/1. It participates in pyrimidine metabolism; UMP biosynthesis via de novo pathway; (S)-dihydroorotate from bicarbonate: step 1/3. Large subunit of the glutamine-dependent carbamoyl phosphate synthetase (CPSase). CPSase catalyzes the formation of carbamoyl phosphate from the ammonia moiety of glutamine, carbonate, and phosphate donated by ATP, constituting the first step of 2 biosynthetic pathways, one leading to arginine and/or urea and the other to pyrimidine nucleotides. The large subunit (synthetase) binds the substrates ammonia (free or transferred from glutamine from the small subunit), hydrogencarbonate and ATP and carries out an ATP-coupled ligase reaction, activating hydrogencarbonate by forming carboxy phosphate which reacts with ammonia to form carbamoyl phosphate. The protein is Carbamoyl phosphate synthase large chain of Thermotoga maritima (strain ATCC 43589 / DSM 3109 / JCM 10099 / NBRC 100826 / MSB8).